Consider the following 920-residue polypeptide: Rho guanine nucleotide exchange factor 1 (920 aa).

Residues 39–230 (DQNSQFQSLE…SLYMRHLGVR (192 aa)) form the RGSL domain. The tract at residues 231–404 (TKSGDKKSGR…PGWRELVPPD (174 aa)) is disordered. Basic and acidic residues predominate over residues 281 to 311 (DCRHLKVEADAEKPGPADRKGGLGMSSRDRT). The span at 364–380 (STEDNGETESPEPGDDG) shows a compositional bias: acidic residues. Phosphoserine occurs at positions 373, 386, 390, 408, and 412. Residues 415–604 (KRQEVISELL…REILHHVNQA (190 aa)) enclose the DH domain. A phosphothreonine mark is found at arginine 432 and threonine 694. The region spanning 646–759 (KLVHEGPLTW…WCNLITETAG (114 aa)) is the PH domain. At tyrosine 737 the chain carries Phosphotyrosine; by JAK2. 2 disordered regions span residues 764–797 (PAPASRLKPRPSPSSIREPLLSSSENGTGGAEMA) and 840–864 (TEEDSGAGPPRDGDGVPGGRAPGPV). Residues 865 to 894 (HTQEIEENLLSLEVAIRQLEELEEEFCRLR) are a coiled coil. At serine 905 the chain carries Phosphoserine.

In terms of assembly, interacts with RHOA, GNA12 and GNA13. Homooligomerizes through the coiled coil region. Interacts with CTNNAL1. May interact with CCPG1. Post-translationally, phosphorylated by PKCA. Angiotensin-2 induced Tyr-737 phosphorylation is mediated by JAK2. Isoform 5 is phosphorylated at 'Ser-390'. As to expression, ubiquitously expressed.

It is found in the cytoplasm. Its subcellular location is the membrane. Its function is as follows. Seems to play a role in the regulation of RhoA GTPase by guanine nucleotide-binding alpha-12 (GNA12) and alpha-13 (GNA13) subunits. Acts as a GTPase-activating protein (GAP) for GNA12 and GNA13, and as guanine nucleotide exchange factor (GEF) for RhoA GTPase. Activated G alpha 13/GNA13 stimulates the RhoGEF activity through interaction with the RGS-like domain. This GEF activity is inhibited by binding to activated GNA12. Mediates angiotensin-2-induced RhoA activation. Isoform 3 and isoform 4 do not homooligomerize and show an enhanced RhoGEF activity. In lymphoid follicles, may trigger activation of GNA13 as part of S1PR2-dependent signaling pathway that leads to inhibition of germinal center (GC) B cell growth and migration outside the GC niche. The polypeptide is Rho guanine nucleotide exchange factor 1 (Arhgef1) (Mus musculus (Mouse)).